Reading from the N-terminus, the 109-residue chain is Nucleoid-associated protein NT01EI_1109 (109 aa).

The segment at Lys89–Phe109 is disordered.

This sequence belongs to the YbaB/EbfC family. In terms of assembly, homodimer.

Its subcellular location is the cytoplasm. The protein localises to the nucleoid. Functionally, binds to DNA and alters its conformation. May be involved in regulation of gene expression, nucleoid organization and DNA protection. The chain is Nucleoid-associated protein NT01EI_1109 from Edwardsiella ictaluri (strain 93-146).